The primary structure comprises 197 residues: Holliday junction branch migration complex subunit RuvA (197 aa).

Positions 1-64 (MIASVRGTLI…EDALTLYGFK (64 aa)) are domain I. The tract at residues 65 to 145 (TVEQRQLFET…GLPVAPGVSP (81 aa)) is domain II. Positions 146 to 153 (AVAAVNAE) are flexible linker. The interval 153 to 197 (ELSEMLVSLGFSSAEASTAIAALPPDAPLDLEERLRLALRYFGAR) is domain III.

It belongs to the RuvA family. As to quaternary structure, homotetramer. Forms an RuvA(8)-RuvB(12)-Holliday junction (HJ) complex. HJ DNA is sandwiched between 2 RuvA tetramers; dsDNA enters through RuvA and exits via RuvB. An RuvB hexamer assembles on each DNA strand where it exits the tetramer. Each RuvB hexamer is contacted by two RuvA subunits (via domain III) on 2 adjacent RuvB subunits; this complex drives branch migration. In the full resolvosome a probable DNA-RuvA(4)-RuvB(12)-RuvC(2) complex forms which resolves the HJ.

The protein resides in the cytoplasm. In terms of biological role, the RuvA-RuvB-RuvC complex processes Holliday junction (HJ) DNA during genetic recombination and DNA repair, while the RuvA-RuvB complex plays an important role in the rescue of blocked DNA replication forks via replication fork reversal (RFR). RuvA specifically binds to HJ cruciform DNA, conferring on it an open structure. The RuvB hexamer acts as an ATP-dependent pump, pulling dsDNA into and through the RuvAB complex. HJ branch migration allows RuvC to scan DNA until it finds its consensus sequence, where it cleaves and resolves the cruciform DNA. This Roseiflexus castenholzii (strain DSM 13941 / HLO8) protein is Holliday junction branch migration complex subunit RuvA.